A 196-amino-acid chain; its full sequence is DnaA initiator-associating protein DiaA (196 aa).

One can recognise an SIS domain in the interval 34–196 (LVQSLLNGNK…DNTLFPHQAD (163 aa)).

It belongs to the SIS family. DiaA subfamily. Homotetramer; dimer of dimers.

Its function is as follows. Required for the timely initiation of chromosomal replication via direct interactions with the DnaA initiator protein. This Edwardsiella ictaluri (strain 93-146) protein is DnaA initiator-associating protein DiaA.